An 82-amino-acid chain; its full sequence is MPNIKSAIKRVKVNEKANIANSQAKSAMRTTVKKAENAVAENAENKQELLQAAFKSLDKAASKGLIHKNAAARKKSRLAKKA.

This sequence belongs to the bacterial ribosomal protein bS20 family.

In terms of biological role, binds directly to 16S ribosomal RNA. The sequence is that of Small ribosomal subunit protein bS20 from Lysinibacillus sphaericus (strain C3-41).